We begin with the raw amino-acid sequence, 212 residues long: Large ribosomal subunit protein bL25 (212 aa).

Residues 183–212 form a disordered region; that stretch reads HDLPVASIHKPKGAKADDAEGEEGEEGGEE. The span at 201–212 shows a compositional bias: acidic residues; sequence AEGEEGEEGGEE.

This sequence belongs to the bacterial ribosomal protein bL25 family. CTC subfamily. Part of the 50S ribosomal subunit; part of the 5S rRNA/L5/L18/L25 subcomplex. Contacts the 5S rRNA. Binds to the 5S rRNA independently of L5 and L18.

Functionally, this is one of the proteins that binds to the 5S RNA in the ribosome where it forms part of the central protuberance. The polypeptide is Large ribosomal subunit protein bL25 (Marinobacter nauticus (strain ATCC 700491 / DSM 11845 / VT8) (Marinobacter aquaeolei)).